A 586-amino-acid chain; its full sequence is Old nuclease (586 aa).

Positions 1–163 are ATPase domain N-terminus; the sequence is MTVRLASVSI…VEDSTKCKNT (163 aa). Residue 34-38 coordinates ATP; that stretch reads NAGKS. Residues 164 to 270 form a dimerization domain region; it reads TTIGKILSAI…SRFGHGTQRS (107 aa). The interval 271 to 390 is ATPase domain C-terminus; the sequence is IQMALIQYLA…TLSNSSYLLF (120 aa). The toprim domain stretch occupies residues 393–586; that stretch reads EVLLVEGKTE…DEMEDFIKWI (194 aa). A divalent metal cation-binding residues include Glu398, Glu402, Asp453, Asp455, Asp541, and Glu543. The Stabilizes transition state or protonates leaving group role is filled by Arg570.

Belongs to the class 1 OLD nuclease family. Mg(2+) is required as a cofactor.

The catalysed reaction is Exonucleolytic cleavage in the 5'- to 3'-direction to yield nucleoside 5'-phosphates.. Functionally, an exonuclease that acts preferentially on linear dsDNA, processively degrading it from 5'-3', releasing 5'-phosphomononucleotides. Initiates on 5'-phosphate and 5'-hydroxyl ends. Also acts on linear ssDNA, nicked DNA and RNA. ATP enhances but is not necessary for exonuclease activity; has ATPase activity that is not stimulated by DNA. The old protein kills E.coli recB and recC mutants and interferes with phage lambda growth. Both the exonuclease and ATPase activities are required in vivo. Probably interferes with lambda phage by degrading its linear DNA. Isolated as a mutant able to lysogenize E.coli strain C cells normally not susceptible to lysis by phage P2. This chain is Old nuclease, found in Enterobacteriaceae (Bacteriophage P2).